The primary structure comprises 432 residues: 3-phosphoshikimate 1-carboxyvinyltransferase (432 aa).

Residues Lys-22, Ser-23, and Arg-27 each contribute to the 3-phosphoshikimate site. Lys-22 is a phosphoenolpyruvate binding site. Positions 96 and 127 each coordinate phosphoenolpyruvate. Residues Ser-173, Ser-174, Gln-175, Ser-201, Asp-316, Asn-339, and Lys-343 each contribute to the 3-phosphoshikimate site. Gln-175 is a phosphoenolpyruvate binding site. The active-site Proton acceptor is Asp-316. Phosphoenolpyruvate contacts are provided by Arg-347, Arg-391, and Lys-416.

Belongs to the EPSP synthase family. Monomer.

It is found in the cytoplasm. It catalyses the reaction 3-phosphoshikimate + phosphoenolpyruvate = 5-O-(1-carboxyvinyl)-3-phosphoshikimate + phosphate. It functions in the pathway metabolic intermediate biosynthesis; chorismate biosynthesis; chorismate from D-erythrose 4-phosphate and phosphoenolpyruvate: step 6/7. In terms of biological role, catalyzes the transfer of the enolpyruvyl moiety of phosphoenolpyruvate (PEP) to the 5-hydroxyl of shikimate-3-phosphate (S3P) to produce enolpyruvyl shikimate-3-phosphate and inorganic phosphate. The sequence is that of 3-phosphoshikimate 1-carboxyvinyltransferase from Actinobacillus pleuropneumoniae serotype 5b (strain L20).